We begin with the raw amino-acid sequence, 396 residues long: S-adenosylmethionine synthase (396 aa).

His16 provides a ligand contact to ATP. Asp18 lines the Mg(2+) pocket. Glu44 is a binding site for K(+). The L-methionine site is built by Glu57 and Gln100. The segment at 100–110 (QSPDIAQGVDR) is flexible loop. Residues 167–169 (DAK), 233–234 (RF), Asp242, 248–249 (RK), Ala265, and Lys269 each bind ATP. Position 242 (Asp242) interacts with L-methionine. An L-methionine-binding site is contributed by Lys273.

The protein belongs to the AdoMet synthase family. In terms of assembly, homotetramer; dimer of dimers. Mg(2+) is required as a cofactor. K(+) serves as cofactor.

It localises to the cytoplasm. It catalyses the reaction L-methionine + ATP + H2O = S-adenosyl-L-methionine + phosphate + diphosphate. It functions in the pathway amino-acid biosynthesis; S-adenosyl-L-methionine biosynthesis; S-adenosyl-L-methionine from L-methionine: step 1/1. Functionally, catalyzes the formation of S-adenosylmethionine (AdoMet) from methionine and ATP. The overall synthetic reaction is composed of two sequential steps, AdoMet formation and the subsequent tripolyphosphate hydrolysis which occurs prior to release of AdoMet from the enzyme. In Paraburkholderia phytofirmans (strain DSM 17436 / LMG 22146 / PsJN) (Burkholderia phytofirmans), this protein is S-adenosylmethionine synthase.